Consider the following 320-residue polypeptide: Ferrochelatase (320 aa).

Fe cation-binding residues include His-194 and Glu-275.

The protein belongs to the ferrochelatase family.

The protein resides in the cytoplasm. The catalysed reaction is heme b + 2 H(+) = protoporphyrin IX + Fe(2+). It participates in porphyrin-containing compound metabolism; protoheme biosynthesis; protoheme from protoporphyrin-IX: step 1/1. Functionally, catalyzes the ferrous insertion into protoporphyrin IX. The polypeptide is Ferrochelatase (Yersinia pestis bv. Antiqua (strain Antiqua)).